The following is a 162-amino-acid chain: NADH-quinone oxidoreductase subunit I (162 aa).

2 4Fe-4S ferredoxin-type domains span residues 53 to 83 (LRRY…IDSA) and 93 to 122 (TRYD…ETHI). [4Fe-4S] cluster is bound by residues cysteine 63, cysteine 66, cysteine 69, cysteine 73, cysteine 102, cysteine 105, cysteine 108, and cysteine 112.

It belongs to the complex I 23 kDa subunit family. In terms of assembly, NDH-1 is composed of 14 different subunits. Subunits NuoA, H, J, K, L, M, N constitute the membrane sector of the complex. [4Fe-4S] cluster serves as cofactor.

Its subcellular location is the cell inner membrane. It catalyses the reaction a quinone + NADH + 5 H(+)(in) = a quinol + NAD(+) + 4 H(+)(out). Its function is as follows. NDH-1 shuttles electrons from NADH, via FMN and iron-sulfur (Fe-S) centers, to quinones in the respiratory chain. The immediate electron acceptor for the enzyme in this species is believed to be ubiquinone. Couples the redox reaction to proton translocation (for every two electrons transferred, four hydrogen ions are translocated across the cytoplasmic membrane), and thus conserves the redox energy in a proton gradient. The chain is NADH-quinone oxidoreductase subunit I from Xanthomonas oryzae pv. oryzae (strain MAFF 311018).